The sequence spans 86 residues: Large ribosomal subunit protein uL30m (86 aa).

Positions 67-86 are disordered; that stretch reads QQRELRKSNPGFIVEKRTID.

Belongs to the universal ribosomal protein uL30 family. Component of the mitochondrial large ribosomal subunit (mt-LSU). Mature yeast 74S mitochondrial ribosomes consist of a small (37S) and a large (54S) subunit. The 37S small subunit contains a 15S ribosomal RNA (15S mt-rRNA) and 34 different proteins. The 54S large subunit contains a 21S rRNA (21S mt-rRNA) and 46 different proteins.

The protein resides in the mitochondrion. Its function is as follows. Component of the mitochondrial ribosome (mitoribosome), a dedicated translation machinery responsible for the synthesis of mitochondrial genome-encoded proteins, including at least some of the essential transmembrane subunits of the mitochondrial respiratory chain. The mitoribosomes are attached to the mitochondrial inner membrane and translation products are cotranslationally integrated into the membrane. The chain is Large ribosomal subunit protein uL30m (MRPL33) from Saccharomyces cerevisiae (strain ATCC 204508 / S288c) (Baker's yeast).